Here is a 332-residue protein sequence, read N- to C-terminus: Ribosomal RNA small subunit methyltransferase H (332 aa).

S-adenosyl-L-methionine contacts are provided by residues 42–44, D62, F86, D105, and Q112; that span reads GGH.

Belongs to the methyltransferase superfamily. RsmH family.

The protein localises to the cytoplasm. The catalysed reaction is cytidine(1402) in 16S rRNA + S-adenosyl-L-methionine = N(4)-methylcytidine(1402) in 16S rRNA + S-adenosyl-L-homocysteine + H(+). Specifically methylates the N4 position of cytidine in position 1402 (C1402) of 16S rRNA. The chain is Ribosomal RNA small subunit methyltransferase H from Cupriavidus pinatubonensis (strain JMP 134 / LMG 1197) (Cupriavidus necator (strain JMP 134)).